The following is a 49-amino-acid chain: U-theraphotoxin-Lk2a (49 aa).

4 cysteine pairs are disulfide-bonded: cysteine 4/cysteine 17, cysteine 8/cysteine 41, cysteine 22/cysteine 24, and cysteine 35/cysteine 46.

Belongs to the neurotoxin 12 (Hwtx-2) family. 04 (lasiotoxin) subfamily. As to expression, expressed by the venom gland.

The protein resides in the secreted. Its function is as follows. Toxin that causes irreversible contractile paralysis into adult Aedes aegypti resulting in 100% mortality after 24 hours. The protein is U-theraphotoxin-Lk2a of Lasiodora klugi (Bahia scarlet tarantula).